Consider the following 160-residue polypeptide: CXXC motif containing zinc binding protein (160 aa).

Positions 33, 36, 67, and 70 each coordinate Zn(2+). Ser-75 is modified (phosphoserine).

The protein belongs to the UPF0587 family. In terms of assembly, monomer.

The sequence is that of CXXC motif containing zinc binding protein (Czib) from Mus musculus (Mouse).